Reading from the N-terminus, the 62-residue chain is Large ribosomal subunit protein bL28 (62 aa).

Residues 1–24 (MGKQCFVTGRKASTGNNRSHALNS) are disordered. The segment covering 11-24 (KASTGNNRSHALNS) has biased composition (polar residues).

Belongs to the bacterial ribosomal protein bL28 family.

This Staphylococcus saprophyticus subsp. saprophyticus (strain ATCC 15305 / DSM 20229 / NCIMB 8711 / NCTC 7292 / S-41) protein is Large ribosomal subunit protein bL28.